Consider the following 346-residue polypeptide: Phosphate acyltransferase (346 aa).

The protein belongs to the PlsX family. In terms of assembly, homodimer. Probably interacts with PlsY.

Its subcellular location is the cytoplasm. It carries out the reaction a fatty acyl-[ACP] + phosphate = an acyl phosphate + holo-[ACP]. It functions in the pathway lipid metabolism; phospholipid metabolism. Functionally, catalyzes the reversible formation of acyl-phosphate (acyl-PO(4)) from acyl-[acyl-carrier-protein] (acyl-ACP). This enzyme utilizes acyl-ACP as fatty acyl donor, but not acyl-CoA. This Geotalea daltonii (strain DSM 22248 / JCM 15807 / FRC-32) (Geobacter daltonii) protein is Phosphate acyltransferase.